Reading from the N-terminus, the 458-residue chain is Serine protease HTRA2, mitochondrial (458 aa).

The N-terminal 31 residues, 1-31 (MAALRAGRGAGWSLRGWRALWGGRWGKGPLL), are a transit peptide targeting the mitochondrion. The propeptide occupies 32–133 (TPDLRALLTS…GGRGPPAVLA (102 aa)). A helical membrane pass occupies residues 105-125 (VWLAVALGAGGAVLLLFWGGG). The IAP-binding motif signature appears at 134–137 (SVLG). The serine protease stretch occupies residues 166–342 (ILGRHPFSGR…IPSDRLREFL (177 aa)). Catalysis depends on charge relay system residues His198, Asp228, and Ser306. Residues 364–445 (VMMLTLTPSI…QLAVRIRRGQ (82 aa)) enclose the PDZ domain.

It belongs to the peptidase S1C family. As to quaternary structure, homotrimer. Interacts with MXI2. Interacts with THAP5 under apoptotic conditions. The mature protein, but not the precursor, binds to BIRC2/c-IAP1, BIRC3/c-IAP2 and XIAP/BIRC4. Interacts with BIRC6/bruce. Interacts with AREL1 (via HECT domain); in the cytoplasm following induction of apoptosis. In terms of processing, ubiquitinated by BIRC6; this activity is inhibited by DIABLO/SMAC. Autoproteolytically activated.

Its subcellular location is the mitochondrion intermembrane space. It localises to the mitochondrion membrane. The enzyme catalyses Cleavage of non-polar aliphatic amino-acids at the P1 position, with a preference for Val, Ile and Met. At the P2 and P3 positions, Arg is selected most strongly with a secondary preference for other hydrophilic residues.. Its activity is regulated as follows. Inhibited by BIRC6. Its function is as follows. Serine protease that shows proteolytic activity against a non-specific substrate beta-casein. Promotes apoptosis by either relieving the inhibition of BIRC proteins on caspases, leading to an increase in caspase activity; or by a BIRC inhibition-independent, caspase-independent and serine protease activity-dependent mechanism. Cleaves BIRC6 and relieves its inhibition on CASP3, CASP7 and CASP9, but it is also prone to inhibition by BIRC6. Cleaves THAP5 and promotes its degradation during apoptosis. This is Serine protease HTRA2, mitochondrial (HTRA2) from Bos taurus (Bovine).